We begin with the raw amino-acid sequence, 190 residues long: Female-specific histamine-binding protein 1 (190 aa).

The signal sequence occupies residues 1–18 (MKLLLSLAFVLALSQVKA). Histamine contacts are provided by Tyr54, Asp57, Trp60, Glu100, Tyr118, Glu153, and Trp155. Intrachain disulfides connect Cys66/Cys187 and Cys137/Cys166.

This sequence belongs to the calycin superfamily. Histamine-binding salivary protein family. In terms of assembly, monomer. In terms of tissue distribution, expressed in salivary glands.

Its subcellular location is the secreted. In terms of biological role, salivary tick protein that acts by scavenging histamine at the wound site, outcompeting histamine receptors for histamine, thereby overcoming host inflammatory responses. Binds histamine with a high-affinity (Kd=18 nM). Contains two binding histamine sites (H and L), that appear to bind histamine with differing affinities (high and low). In vivo, when tested on a mouse asthma model, shows a profound inhibitory effect on allergic asthma. Aerosol administration of this protein prevents airway hyperreactivity and abrogates peribronchial inflammation, eosinophil recruitment, mucus hypersecretion, and interleukins (IL-4 and IL-5) secretion. In addition, when tested on a mouse model of acute respiratory distress syndrome (ARDS), it attenuates endotoxin-induced acute lung injury. The polypeptide is Female-specific histamine-binding protein 1 (Rhipicephalus appendiculatus (Brown ear tick)).